Reading from the N-terminus, the 532-residue chain is Phosphoenolpyruvate carboxykinase (ATP) (532 aa).

3 residues coordinate substrate: R60, Y194, and K200. Residues K200, H219, and 237-245 (GLSGTGKTT) each bind ATP. Mn(2+) contacts are provided by K200 and H219. D258 provides a ligand contact to Mn(2+). ATP-binding residues include E286, R324, and T449. R324 contributes to the substrate binding site.

Belongs to the phosphoenolpyruvate carboxykinase (ATP) family. Requires Mn(2+) as cofactor.

It is found in the cytoplasm. It catalyses the reaction oxaloacetate + ATP = phosphoenolpyruvate + ADP + CO2. Its pathway is carbohydrate biosynthesis; gluconeogenesis. Its function is as follows. Involved in the gluconeogenesis. Catalyzes the conversion of oxaloacetate (OAA) to phosphoenolpyruvate (PEP) through direct phosphoryl transfer between the nucleoside triphosphate and OAA. This is Phosphoenolpyruvate carboxykinase (ATP) from Paracoccus denitrificans (strain Pd 1222).